A 416-amino-acid polypeptide reads, in one-letter code: Multifunctional CCA protein (416 aa).

ATP-binding residues include glycine 8 and arginine 11. Glycine 8 and arginine 11 together coordinate CTP. Mg(2+) contacts are provided by aspartate 21 and aspartate 23. Residues arginine 91, arginine 137, and arginine 140 each coordinate ATP. CTP is bound by residues arginine 91, arginine 137, and arginine 140. Residues 228 to 329 (TGLHTMMVLA…IKLFDKADFW (102 aa)) form the HD domain.

The protein belongs to the tRNA nucleotidyltransferase/poly(A) polymerase family. Bacterial CCA-adding enzyme type 1 subfamily. Monomer. Can also form homodimers and oligomers. It depends on Mg(2+) as a cofactor. Ni(2+) serves as cofactor.

It catalyses the reaction a tRNA precursor + 2 CTP + ATP = a tRNA with a 3' CCA end + 3 diphosphate. The enzyme catalyses a tRNA with a 3' CCA end + 2 CTP + ATP = a tRNA with a 3' CCACCA end + 3 diphosphate. Catalyzes the addition and repair of the essential 3'-terminal CCA sequence in tRNAs without using a nucleic acid template. Adds these three nucleotides in the order of C, C, and A to the tRNA nucleotide-73, using CTP and ATP as substrates and producing inorganic pyrophosphate. tRNA 3'-terminal CCA addition is required both for tRNA processing and repair. Also involved in tRNA surveillance by mediating tandem CCA addition to generate a CCACCA at the 3' terminus of unstable tRNAs. While stable tRNAs receive only 3'-terminal CCA, unstable tRNAs are marked with CCACCA and rapidly degraded. The protein is Multifunctional CCA protein of Shewanella sp. (strain MR-7).